The sequence spans 95 residues: Aspartyl/glutamyl-tRNA(Asn/Gln) amidotransferase subunit C (95 aa).

Belongs to the GatC family. In terms of assembly, heterotrimer of A, B and C subunits.

It carries out the reaction L-glutamyl-tRNA(Gln) + L-glutamine + ATP + H2O = L-glutaminyl-tRNA(Gln) + L-glutamate + ADP + phosphate + H(+). The enzyme catalyses L-aspartyl-tRNA(Asn) + L-glutamine + ATP + H2O = L-asparaginyl-tRNA(Asn) + L-glutamate + ADP + phosphate + 2 H(+). Its function is as follows. Allows the formation of correctly charged Asn-tRNA(Asn) or Gln-tRNA(Gln) through the transamidation of misacylated Asp-tRNA(Asn) or Glu-tRNA(Gln) in organisms which lack either or both of asparaginyl-tRNA or glutaminyl-tRNA synthetases. The reaction takes place in the presence of glutamine and ATP through an activated phospho-Asp-tRNA(Asn) or phospho-Glu-tRNA(Gln). This chain is Aspartyl/glutamyl-tRNA(Asn/Gln) amidotransferase subunit C, found in Geobacter sulfurreducens (strain ATCC 51573 / DSM 12127 / PCA).